The sequence spans 150 residues: Transcription antitermination protein NusB (150 aa).

Belongs to the NusB family.

Involved in transcription antitermination. Required for transcription of ribosomal RNA (rRNA) genes. Binds specifically to the boxA antiterminator sequence of the ribosomal RNA (rrn) operons. This is Transcription antitermination protein NusB from Streptococcus pyogenes serotype M6 (strain ATCC BAA-946 / MGAS10394).